The sequence spans 449 residues: Phosphoglucosamine mutase (449 aa).

The active-site Phosphoserine intermediate is Ser100. Positions 100, 241, 243, and 245 each coordinate Mg(2+). Residue Ser100 is modified to Phosphoserine.

It belongs to the phosphohexose mutase family. Mg(2+) serves as cofactor. Post-translationally, activated by phosphorylation.

It carries out the reaction alpha-D-glucosamine 1-phosphate = D-glucosamine 6-phosphate. In terms of biological role, catalyzes the conversion of glucosamine-6-phosphate to glucosamine-1-phosphate. The sequence is that of Phosphoglucosamine mutase from Geobacillus kaustophilus (strain HTA426).